A 143-amino-acid polypeptide reads, in one-letter code: Papain inhibitor (143 aa).

A signal peptide spans 1–33; the sequence is MREFRRVRRVRFAACALVAAATGITLAAGPASA.

In terms of assembly, monomer.

The protein resides in the secreted. In terms of biological role, stress protein produced under hyperthermal stress conditions. Serves as a glutamine and lysine donor substrate for transglutaminase. Inhibits the cysteine proteases papain and bromelain as well as the bovine serine protease trypsin. Has hardly any or no effect on subtilisin, bovine chymotrypsin, proteinase K from T.album, transglutaminase-activating metalloproteinase (TAMEP) from S.mobaraensis, dispase from B.polymyxa, thermolysin from B.thermoproteolyticus or collagenase from C.histolyticum. This is Papain inhibitor (pi) from Streptomyces mobaraensis (Streptoverticillium mobaraense).